We begin with the raw amino-acid sequence, 380 residues long: Alcohol dehydrogenase 1 (380 aa).

8 residues coordinate Zn(2+): Cys-48, Thr-50, His-70, Cys-100, Cys-103, Cys-106, Cys-114, and Cys-178. An alcohol is bound by residues Thr-50 and His-70. Thr-50 contributes to the NAD(+) binding site. NAD(+) is bound by residues 203 to 208 (GLGAVG), Asp-227, Arg-232, Thr-273, Val-296, 296 to 298 (VGV), Phe-323, and Arg-373.

This sequence belongs to the zinc-containing alcohol dehydrogenase family. Homodimer. Homotetramer. Zn(2+) serves as cofactor.

The protein localises to the cytoplasm. It catalyses the reaction a primary alcohol + NAD(+) = an aldehyde + NADH + H(+). The catalysed reaction is a secondary alcohol + NAD(+) = a ketone + NADH + H(+). The chain is Alcohol dehydrogenase 1 (ADH1) from Solanum tuberosum (Potato).